The primary structure comprises 438 residues: Enolase (438 aa).

Gln-174 serves as a coordination point for (2R)-2-phosphoglycerate. Glu-216 functions as the Proton donor in the catalytic mechanism. Mg(2+) is bound by residues Asp-253, Glu-297, and Asp-324. (2R)-2-phosphoglycerate contacts are provided by Lys-349, Arg-378, Ser-379, and Lys-400. Lys-349 functions as the Proton acceptor in the catalytic mechanism.

The protein belongs to the enolase family. Component of the RNA degradosome, a multiprotein complex involved in RNA processing and mRNA degradation. Mg(2+) is required as a cofactor.

The protein resides in the cytoplasm. Its subcellular location is the secreted. It is found in the cell surface. The catalysed reaction is (2R)-2-phosphoglycerate = phosphoenolpyruvate + H2O. It participates in carbohydrate degradation; glycolysis; pyruvate from D-glyceraldehyde 3-phosphate: step 4/5. Functionally, catalyzes the reversible conversion of 2-phosphoglycerate (2-PG) into phosphoenolpyruvate (PEP). It is essential for the degradation of carbohydrates via glycolysis. The chain is Enolase from Psychrobacter cryohalolentis (strain ATCC BAA-1226 / DSM 17306 / VKM B-2378 / K5).